The primary structure comprises 410 residues: MERVKVIDSIMGSGKTTYIIKMMNEAPKNEHFIFITPYLDEVTRIKRSCTNRKFYEPKIHSEEGETLYKLDSLHKHLADNNDIVTTHALFSMANETTKELIYSGNYTLILDETMEVVKKLNISKDDLDMLFQNEWIKNNNGTIIWNDEQERNLNREYKGEFQTLKHLAKSKNLILHNESVLFWQFPADIFAQFKQVYNLTYLFDAQIQKYYYDINGIEYELYAVVKDNDSYKLMQHSRQFDKAKKDVLRHKIKIYEGDLNKIGDDYYALSKNWFEKRSVLHKRLKNNILNYYQNILKSKSKGNLWTTFKSHKSKLSGKGYTKGFLACNIKATNEYSHKRSLVYSINRFVNPAIDDYFRSKGIIINEDNFALSEMIQWIWRSAIRNGQDINIYVPSSRMRKLLMDWLENQR.

In Bacillus subtilis (strain 168), this protein is SPbeta prophage-derived uncharacterized protein YonV (yonV).